Reading from the N-terminus, the 446-residue chain is Phosphoglucosamine mutase (446 aa).

Catalysis depends on Ser-100, which acts as the Phosphoserine intermediate. Residues Ser-100, Asp-239, Asp-241, and Asp-243 each contribute to the Mg(2+) site. Ser-100 is modified (phosphoserine).

The protein belongs to the phosphohexose mutase family. It depends on Mg(2+) as a cofactor. Post-translationally, activated by phosphorylation.

The catalysed reaction is alpha-D-glucosamine 1-phosphate = D-glucosamine 6-phosphate. Catalyzes the conversion of glucosamine-6-phosphate to glucosamine-1-phosphate. This is Phosphoglucosamine mutase from Oceanobacillus iheyensis (strain DSM 14371 / CIP 107618 / JCM 11309 / KCTC 3954 / HTE831).